Reading from the N-terminus, the 84-residue chain is Delta-thalatoxin-Tas1a (84 aa).

Residues 1–19 (MAYLKIVLVALMLVLAVSA) form the signal peptide. A propeptide spanning residues 20–33 (MRRPDQQDQDISVA) is cleaved from the precursor. 3 cysteine pairs are disulfide-bonded: Cys38–Cys78, Cys40–Cys68, and Cys61–Cys79.

This sequence belongs to the sea anemone sodium channel inhibitory toxin family. Type II subfamily.

It localises to the secreted. It is found in the nematocyst. Binds specifically to the voltage-gated sodium channel (Nav) and delays its inactivation. The polypeptide is Delta-thalatoxin-Tas1a (Thalassianthus aster (Fuzzy-tipped anemone)).